We begin with the raw amino-acid sequence, 571 residues long: Quinone-dependent D-lactate dehydrogenase (571 aa).

Positions 44-273 (GGGPVFAVVR…FAVRTRTFPR (230 aa)) constitute an FAD-binding PCMH-type domain. Residues 78 to 82 (ASNTG), 86 to 87 (GS), Gly145, Ser152, Gly162, and Val263 contribute to the FAD site.

The protein belongs to the quinone-dependent D-lactate dehydrogenase family. Requires FAD as cofactor.

The protein localises to the cell membrane. It catalyses the reaction (R)-lactate + a quinone = a quinol + pyruvate. Its function is as follows. Catalyzes the oxidation of D-lactate to pyruvate. Also has weak activity with L-lactate and DL-2-hydroxybutyrate. Electrons derived from D-lactate oxidation enter the electron transport chain. Essential for growth with D-lactate as sole carbon and energy source. This chain is Quinone-dependent D-lactate dehydrogenase, found in Corynebacterium glutamicum (strain ATCC 13032 / DSM 20300 / JCM 1318 / BCRC 11384 / CCUG 27702 / LMG 3730 / NBRC 12168 / NCIMB 10025 / NRRL B-2784 / 534).